A 145-amino-acid polypeptide reads, in one-letter code: Deoxyuridine 5'-triphosphate nucleotidohydrolase (145 aa).

Residues 63 to 65 (RSG), N76, and 80 to 82 (TID) contribute to the substrate site.

The protein belongs to the dUTPase family. The cofactor is Mg(2+).

The enzyme catalyses dUTP + H2O = dUMP + diphosphate + H(+). Its pathway is pyrimidine metabolism; dUMP biosynthesis; dUMP from dCTP (dUTP route): step 2/2. Functionally, this enzyme is involved in nucleotide metabolism: it produces dUMP, the immediate precursor of thymidine nucleotides and it decreases the intracellular concentration of dUTP so that uracil cannot be incorporated into DNA. The polypeptide is Deoxyuridine 5'-triphosphate nucleotidohydrolase (Chlamydia pneumoniae (Chlamydophila pneumoniae)).